The chain runs to 413 residues: Serine/threonine transporter SstT (413 aa).

9 helical membrane-spanning segments follow: residues 14–34 (GSLVGQILVGLVLGIALASFS), 44–64 (LGTLFVSALKAVAPVLVFILV), 82–102 (IVLLYLLGTFAAALVAVVVSF), 141–161 (ALASGNFIGILAWAIGLGVAL), 178–198 (GVTFIVRVVIRFAPLGIFGLV), 217–237 (LMVLIGAMLLVALVLNPLIVF), 290–310 (IPLGATINMAGAAITITVLTL), 330–350 (LVAAVCACGASGVAGGSLLLI), and 356–376 (LFGISSDIAMQVVAVGFIIGV).

The protein belongs to the dicarboxylate/amino acid:cation symporter (DAACS) (TC 2.A.23) family.

Its subcellular location is the cell inner membrane. It catalyses the reaction L-serine(in) + Na(+)(in) = L-serine(out) + Na(+)(out). The enzyme catalyses L-threonine(in) + Na(+)(in) = L-threonine(out) + Na(+)(out). In terms of biological role, involved in the import of serine and threonine into the cell, with the concomitant import of sodium (symport system). This is Serine/threonine transporter SstT from Edwardsiella ictaluri (strain 93-146).